Consider the following 253-residue polypeptide: 2-dehydro-3-deoxy-D-gluconate 5-dehydrogenase (253 aa).

14 to 38 contacts NAD(+); sequence VVTGCDTGLGQGMALGLAQAGCDIV. A substrate-binding site is contributed by Ser145. Catalysis depends on Tyr158, which acts as the Proton acceptor.

Belongs to the short-chain dehydrogenases/reductases (SDR) family. As to quaternary structure, homotetramer.

The enzyme catalyses 2-dehydro-3-deoxy-D-gluconate + NAD(+) = 3-deoxy-D-glycero-2,5-hexodiulosonate + NADH + H(+). It carries out the reaction 4-pregnen-20,21-diol-3-one + NAD(+) = 21-hydroxyprogesterone + NADH + H(+). In terms of biological role, catalyzes the reversible reduction of 2,5-diketo-3-deoxygluconate (DKII or 4,6-dihydroxy-2,5-dioxohexanoate) into 2-keto-3-deoxygluconate (KDG or 2-dehydro-3-deoxygluconate) with a concomitant oxidation of NADH. To a lesser extent, can also reduce 5-keto-D-gluconate and oxidize D-gluconate and 1,2-propanediol. Together with KduI, seems to play a role in the catabolism of hexuronates under osmotic stress conditions, substituting for the regular hexuronate degrading enzymes UxaABC and UxuAB whose expression is repressed in these conditions. In vitro, also exhibits NADH-dependent 20-ketosteroid reductase activity against eukaryotic steroid hormone 11-deoxycorticosterone (11-DOC), which is converted into the product 4-pregnen-20,21-diol-3-one. In addition to 11-DOC, five other C21 steroid compounds (11-deoxycortisol, cortisol, corticosterone, cortisone, and 21-hydroxypregnenolone) are reduced by KduD, but steroids lacking the hydroxyl group at C21 position, such as pregnenolone, testosterone propionate, cortisone acetate, or progesterone, cannot be used as substrate. In Escherichia coli (strain K12), this protein is 2-dehydro-3-deoxy-D-gluconate 5-dehydrogenase.